The chain runs to 308 residues: Acetyl-coenzyme A carboxylase carboxyl transferase subunit beta (308 aa).

A CoA carboxyltransferase N-terminal domain is found at 25–294 (VWTKCTSCEQ…PLVVSVNDSP (270 aa)). Positions 29, 32, 48, and 51 each coordinate Zn(2+). The C4-type zinc finger occupies 29–51 (CTSCEQVLYHAELERNLEVCPKC).

It belongs to the AccD/PCCB family. As to quaternary structure, acetyl-CoA carboxylase is a heterohexamer composed of biotin carboxyl carrier protein (AccB), biotin carboxylase (AccC) and two subunits each of ACCase subunit alpha (AccA) and ACCase subunit beta (AccD). The cofactor is Zn(2+).

Its subcellular location is the cytoplasm. It carries out the reaction N(6)-carboxybiotinyl-L-lysyl-[protein] + acetyl-CoA = N(6)-biotinyl-L-lysyl-[protein] + malonyl-CoA. Its pathway is lipid metabolism; malonyl-CoA biosynthesis; malonyl-CoA from acetyl-CoA: step 1/1. Component of the acetyl coenzyme A carboxylase (ACC) complex. Biotin carboxylase (BC) catalyzes the carboxylation of biotin on its carrier protein (BCCP) and then the CO(2) group is transferred by the transcarboxylase to acetyl-CoA to form malonyl-CoA. This chain is Acetyl-coenzyme A carboxylase carboxyl transferase subunit beta, found in Vibrio vulnificus (strain CMCP6).